The chain runs to 129 residues: Omega-scoloptoxin(05)-Ssm1a (129 aa).

The signal sequence occupies residues 1 to 24 (MPSLCIIALFGTLTFYTLIPSIHT). A propeptide spanning residues 25–46 (LKCVRCDGPMSNYDCKTTYPAA) is cleaved from the precursor.

The protein belongs to the scoloptoxin-05 family. Contains 3 disulfide bonds. In terms of tissue distribution, expressed by the venom gland.

It is found in the secreted. Toxin that increase voltage-gated calcium channel (Cav) currents in DRG neurons by 70% and 120%, when 1 uM and 10 uM are tested, respectively. The protein is Omega-scoloptoxin(05)-Ssm1a of Scolopendra mutilans (Chinese red-headed centipede).